A 333-amino-acid chain; its full sequence is Ribonucleoside-diphosphate reductase small chain B (333 aa).

Fe cation contacts are provided by Asp76, Glu107, and His110. Residue Tyr114 is part of the active site. Residues Glu169, Glu203, and His206 each contribute to the Fe cation site.

Belongs to the ribonucleoside diphosphate reductase small chain family. As to quaternary structure, heterodimer of a large and a small chain. Fe cation serves as cofactor. Expressed in roots, rosette leaves, stems and flowers.

It is found in the cytoplasm. It catalyses the reaction a 2'-deoxyribonucleoside 5'-diphosphate + [thioredoxin]-disulfide + H2O = a ribonucleoside 5'-diphosphate + [thioredoxin]-dithiol. Functionally, provides the precursors necessary for DNA synthesis. Catalyzes the biosynthesis of deoxyribonucleotides from the corresponding ribonucleotides. The sequence is that of Ribonucleoside-diphosphate reductase small chain B (RNR2B) from Arabidopsis thaliana (Mouse-ear cress).